A 521-amino-acid polypeptide reads, in one-letter code: Envelope glycoprotein C homolog (521 aa).

A signal peptide spans 1-21 (MGPLGRAWLIAAIFAWALLSA). The Virion surface portion of the chain corresponds to 22–475 (RRGLAEEAEA…DASPGLIGSP (454 aa)). Positions 24–138 (GLAEEAEASP…PSKAPPKERK (115 aa)) are disordered. Residues 41 to 54 (PTETESSAGTTGAT) show a composition bias toward low complexity. Polar residues predominate over residues 66–76 (EDSTPGATTPV). N-linked (GlcNAc...) asparagine; by host glycosylation is present at asparagine 111. Residues cysteine 142 and cysteine 159 are joined by a disulfide bond. The Ig-like V-type domain maps to 155–227 (LYVHCGVADN…LGDNYIFPSP (73 aa)). 2 N-linked (GlcNAc...) asparagine; by host glycosylation sites follow: asparagine 164 and asparagine 208. Cystine bridges form between cysteine 290–cysteine 351, cysteine 390–cysteine 447, and cysteine 394–cysteine 421. Residues 386–451 (GEAVCEARCV…PVDYTCTATG (66 aa)) enclose the Ig-like C2-type domain. Residues 476-496 (VLVSVVAVACGLGAVGLLLVA) form a helical membrane-spanning segment. Over 497–521 (ASCLRRKARVIQPGLTRARALGSAP) the chain is Cytoplasmic.

It belongs to the herpesviridae glycoprotein C family. In terms of assembly, interacts with host complement component C3; this interaction inhibits host immune response by disregulating complement cascade.

The protein localises to the virion membrane. Its function is as follows. Essential for the initial attachment to heparan sulfate moieties of the host cell surface proteoglycans. Plays also a role in host immune evasion by inhibiting the host complement cascade activation. The polypeptide is Envelope glycoprotein C homolog (gC) (Bovine herpesvirus 1.1 (strain Cooper) (BoHV-1)).